Here is a 359-residue protein sequence, read N- to C-terminus: MKVLAAMSGGVDSAVAAARAVDMGHDVVGVHLALSRSASGKRGCCTPRDAQDAAQAAQAIGIPFYVWDFSEEFQEKVIDNFISEYSAGRTPNPCLRCNEHIKFSSLLRRALALGFDAVCTGHYARVFLDEDGTYQLHRASSWAKDQSYVLAVLQQAQLKHCYFPLGATPSKKLVRQEADERGLKVSKKPDSHDVCFIPSSNTGAWLSQRIGRRDGDIIDDLGQRVGSHTGAFAYTVGQRKGLRLSSPAWDGKPRYVLDIEPISNTVVVGPRESLRVDELSGAFTTTGWCFTSRPIECSVQVRAHSDPVSAIAFIRDDVLVVRPDEPVFAVAKGQSAAIYRGTRVLGQLMIDNTKKYASS.

ATP is bound by residues 6 to 13 (AMSGGVDS) and leucine 32. Cysteine 97 functions as the Nucleophile in the catalytic mechanism. An intrachain disulfide couples cysteine 97 to cysteine 195. Glycine 121 contacts ATP. An interaction with tRNA region spans residues 144–146 (KDQ). The active-site Cysteine persulfide intermediate is cysteine 195.

This sequence belongs to the MnmA/TRMU family.

Its subcellular location is the cytoplasm. It carries out the reaction S-sulfanyl-L-cysteinyl-[protein] + uridine(34) in tRNA + AH2 + ATP = 2-thiouridine(34) in tRNA + L-cysteinyl-[protein] + A + AMP + diphosphate + H(+). Its function is as follows. Catalyzes the 2-thiolation of uridine at the wobble position (U34) of tRNA, leading to the formation of s(2)U34. This is tRNA-specific 2-thiouridylase MnmA from Tropheryma whipplei (strain Twist) (Whipple's bacillus).